The sequence spans 120 residues: Large ribosomal subunit protein uL18 (120 aa).

This sequence belongs to the universal ribosomal protein uL18 family. Part of the 50S ribosomal subunit; part of the 5S rRNA/L5/L18/L25 subcomplex. Contacts the 5S and 23S rRNAs.

This is one of the proteins that bind and probably mediate the attachment of the 5S RNA into the large ribosomal subunit, where it forms part of the central protuberance. This Rhodopseudomonas palustris (strain BisA53) protein is Large ribosomal subunit protein uL18.